The chain runs to 355 residues: Anthranilate phosphoribosyltransferase (355 aa).

Residues G91, 94-95 (GD), T99, 101-104 (NIST), 119-127 (KHGNRAMSS), and A131 each bind 5-phospho-alpha-D-ribose 1-diphosphate. G91 is a binding site for anthranilate. A Mg(2+)-binding site is contributed by S103. Position 122 (N122) interacts with anthranilate. R177 provides a ligand contact to anthranilate. Positions 234 and 235 each coordinate Mg(2+).

This sequence belongs to the anthranilate phosphoribosyltransferase family. Homodimer. The cofactor is Mg(2+).

The catalysed reaction is N-(5-phospho-beta-D-ribosyl)anthranilate + diphosphate = 5-phospho-alpha-D-ribose 1-diphosphate + anthranilate. The protein operates within amino-acid biosynthesis; L-tryptophan biosynthesis; L-tryptophan from chorismate: step 2/5. Participates in the tryptophan-dependent indole-3-acetic acid production, which is a phytohormone released by A.brasilense. Its function is as follows. Catalyzes the transfer of the phosphoribosyl group of 5-phosphorylribose-1-pyrophosphate (PRPP) to anthranilate to yield N-(5'-phosphoribosyl)-anthranilate (PRA). This chain is Anthranilate phosphoribosyltransferase, found in Azospirillum brasilense.